The sequence spans 156 residues: 6,7-dimethyl-8-ribityllumazine synthase (156 aa).

Residues phenylalanine 23, 57 to 59 (SWE), and 81 to 83 (AVV) contribute to the 5-amino-6-(D-ribitylamino)uracil site. 86–87 (ET) contributes to the (2S)-2-hydroxy-3-oxobutyl phosphate binding site. Histidine 89 acts as the Proton donor in catalysis. Phenylalanine 114 serves as a coordination point for 5-amino-6-(D-ribitylamino)uracil. Arginine 128 serves as a coordination point for (2S)-2-hydroxy-3-oxobutyl phosphate.

It belongs to the DMRL synthase family.

The catalysed reaction is (2S)-2-hydroxy-3-oxobutyl phosphate + 5-amino-6-(D-ribitylamino)uracil = 6,7-dimethyl-8-(1-D-ribityl)lumazine + phosphate + 2 H2O + H(+). It participates in cofactor biosynthesis; riboflavin biosynthesis; riboflavin from 2-hydroxy-3-oxobutyl phosphate and 5-amino-6-(D-ribitylamino)uracil: step 1/2. Catalyzes the formation of 6,7-dimethyl-8-ribityllumazine by condensation of 5-amino-6-(D-ribitylamino)uracil with 3,4-dihydroxy-2-butanone 4-phosphate. This is the penultimate step in the biosynthesis of riboflavin. This chain is 6,7-dimethyl-8-ribityllumazine synthase, found in Salinibacter ruber (strain DSM 13855 / M31).